Here is a 376-residue protein sequence, read N- to C-terminus: ATP phosphoribosyltransferase regulatory subunit (376 aa).

The protein belongs to the class-II aminoacyl-tRNA synthetase family. HisZ subfamily. Heteromultimer composed of HisG and HisZ subunits.

The protein localises to the cytoplasm. It participates in amino-acid biosynthesis; L-histidine biosynthesis; L-histidine from 5-phospho-alpha-D-ribose 1-diphosphate: step 1/9. Its function is as follows. Required for the first step of histidine biosynthesis. May allow the feedback regulation of ATP phosphoribosyltransferase activity by histidine. The sequence is that of ATP phosphoribosyltransferase regulatory subunit from Brucella canis (strain ATCC 23365 / NCTC 10854 / RM-666).